The following is a 172-amino-acid chain: Large ribosomal subunit protein uL11m (172 aa).

The protein belongs to the universal ribosomal protein uL11 family.

Its subcellular location is the mitochondrion. The protein is Large ribosomal subunit protein uL11m (mrpl11) of Dictyostelium discoideum (Social amoeba).